The chain runs to 433 residues: GTPase Obg (433 aa).

An Obg domain is found at 1 to 158 (MFVDQVKIYV…RNVILELKLL (158 aa)). In terms of domain architecture, OBG-type G spans 159–329 (ADVGLVGFPS…LLFAIADLLE (171 aa)). GTP contacts are provided by residues 165 to 172 (GFPSVGKS), 190 to 194 (FTTLV), 212 to 215 (DLPG), 282 to 285 (NKMD), and 310 to 312 (SAA). Positions 172 and 192 each coordinate Mg(2+). The 79-residue stretch at 350–428 (KYEKEELPFT…LLDYEFEFVD (79 aa)) folds into the OCT domain.

This sequence belongs to the TRAFAC class OBG-HflX-like GTPase superfamily. OBG GTPase family. As to quaternary structure, monomer. The cofactor is Mg(2+).

The protein localises to the cytoplasm. An essential GTPase which binds GTP, GDP and possibly (p)ppGpp with moderate affinity, with high nucleotide exchange rates and a fairly low GTP hydrolysis rate. Plays a role in control of the cell cycle, stress response, ribosome biogenesis and in those bacteria that undergo differentiation, in morphogenesis control. In Geobacillus thermodenitrificans (strain NG80-2), this protein is GTPase Obg.